The primary structure comprises 367 residues: F-box protein At3g56470 (367 aa).

Residues 1–18 show a composition bias toward basic residues; that stretch reads MVTRRRSKKKKKTKRKKQ. The disordered stretch occupies residues 1-24; that stretch reads MVTRRRSKKKKKTKRKKQSSKEKE. The F-box domain occupies 26–81; it reads YQTFINLPCDLLQLVISRLPLKDNIRASAVCKTWHEACVSLRVIHTSPWLIYFSKT.

This chain is F-box protein At3g56470, found in Arabidopsis thaliana (Mouse-ear cress).